Here is a 344-residue protein sequence, read N- to C-terminus: DNA integrity scanning protein DisA (344 aa).

One can recognise a DAC domain in the interval 1-133 (MALLAPGTPI…GRRYLIERPE (133 aa)). ATP-binding positions include G61 and 92 to 96 (TRHRT).

This sequence belongs to the DisA family. Homooctamer. It depends on Mg(2+) as a cofactor.

It catalyses the reaction 2 ATP = 3',3'-c-di-AMP + 2 diphosphate. Participates in a DNA-damage check-point. DisA forms globular foci that rapidly scan along the chromosomes searching for lesions. Its function is as follows. Also has diadenylate cyclase activity, catalyzing the condensation of 2 ATP molecules into cyclic di-AMP (c-di-AMP). c-di-AMP likely acts as a signaling molecule that may couple DNA integrity with a cellular process. This Cutibacterium acnes (strain DSM 16379 / KPA171202) (Propionibacterium acnes) protein is DNA integrity scanning protein DisA.